Consider the following 758-residue polypeptide: 5-methyltetrahydropteroyltriglutamate--homocysteine methyltransferase (758 aa).

5-methyltetrahydropteroyltri-L-glutamate-binding positions include 16–19 (RELK) and K116. L-homocysteine contacts are provided by residues 436–438 (IGS) and E489. L-methionine contacts are provided by residues 436 to 438 (IGS) and E489. Residues 520-521 (RC) and W566 each bind 5-methyltetrahydropteroyltri-L-glutamate. D604 serves as a coordination point for L-homocysteine. D604 is a binding site for L-methionine. E610 contributes to the 5-methyltetrahydropteroyltri-L-glutamate binding site. The Zn(2+) site is built by H646, C648, and E670. The active-site Proton donor is the H699. Residue C731 participates in Zn(2+) binding.

The protein belongs to the vitamin-B12 independent methionine synthase family. It depends on Zn(2+) as a cofactor.

The catalysed reaction is 5-methyltetrahydropteroyltri-L-glutamate + L-homocysteine = tetrahydropteroyltri-L-glutamate + L-methionine. The protein operates within amino-acid biosynthesis; L-methionine biosynthesis via de novo pathway; L-methionine from L-homocysteine (MetE route): step 1/1. Catalyzes the transfer of a methyl group from 5-methyltetrahydrofolate to homocysteine resulting in methionine formation. The protein is 5-methyltetrahydropteroyltriglutamate--homocysteine methyltransferase of Xylella fastidiosa (strain M12).